The primary structure comprises 77 residues: Acyl carrier protein (77 aa).

The 76-residue stretch at Ser2 to Gln77 folds into the Carrier domain. O-(pantetheine 4'-phosphoryl)serine is present on Ser37.

The protein belongs to the acyl carrier protein (ACP) family. Post-translationally, 4'-phosphopantetheine is transferred from CoA to a specific serine of apo-ACP by AcpS. This modification is essential for activity because fatty acids are bound in thioester linkage to the sulfhydryl of the prosthetic group.

The protein resides in the cytoplasm. Its pathway is lipid metabolism; fatty acid biosynthesis. Carrier of the growing fatty acid chain in fatty acid biosynthesis. This is Acyl carrier protein from Vibrio campbellii (strain ATCC BAA-1116).